We begin with the raw amino-acid sequence, 725 residues long: Glyoxysomal fatty acid beta-oxidation multifunctional protein MFP-a (725 aa).

E119 acts as the Nucleophile in catalysis. Catalysis depends on E139, which acts as the Proton acceptor. The Microbody targeting signal signature appears at 723–725; that stretch reads SRL.

This sequence in the N-terminal section; belongs to the enoyl-CoA hydratase/isomerase family. The protein in the central section; belongs to the 3-hydroxyacyl-CoA dehydrogenase family.

Its subcellular location is the glyoxysome. The enzyme catalyses a (3S)-3-hydroxyacyl-CoA = a (2E)-enoyl-CoA + H2O. It catalyses the reaction a 4-saturated-(3S)-3-hydroxyacyl-CoA = a (3E)-enoyl-CoA + H2O. The catalysed reaction is a (3Z)-enoyl-CoA = a 4-saturated (2E)-enoyl-CoA. It carries out the reaction a (3E)-enoyl-CoA = a 4-saturated (2E)-enoyl-CoA. The enzyme catalyses (3S)-3-hydroxybutanoyl-CoA = (3R)-3-hydroxybutanoyl-CoA. It catalyses the reaction a (3S)-3-hydroxyacyl-CoA + NAD(+) = a 3-oxoacyl-CoA + NADH + H(+). The protein operates within lipid metabolism; fatty acid beta-oxidation. In Brassica napus (Rape), this protein is Glyoxysomal fatty acid beta-oxidation multifunctional protein MFP-a.